Consider the following 657-residue polypeptide: Replication restart protein PriA (657 aa).

Positions Ile143–Leu309 constitute a Helicase ATP-binding domain. An ATP-binding site is contributed by Gly156 to Thr163. The DEAH box motif lies at Asp252–His255. Zn(2+) contacts are provided by Cys366, Cys369, Cys375, Cys378, Cys393, Cys396, Cys406, and Cys409. The 181-residue stretch at Ala390–Phe570 folds into the Helicase C-terminal domain.

The protein belongs to the helicase family. PriA subfamily. Component of the replication restart primosome. The cofactor is Zn(2+).

It catalyses the reaction Couples ATP hydrolysis with the unwinding of duplex DNA by translocating in the 3'-5' direction.. It carries out the reaction ATP + H2O = ADP + phosphate + H(+). Functionally, initiates the restart of stalled replication forks, which reloads the replicative helicase on sites other than the origin of replication. Recognizes and binds to abandoned replication forks and remodels them to uncover a helicase loading site. Promotes assembly of the primosome at these replication forks. The chain is Replication restart protein PriA from Treponema pallidum (strain Nichols).